The primary structure comprises 189 residues: Large ribosomal subunit protein bL9 (189 aa).

The protein belongs to the bacterial ribosomal protein bL9 family.

Binds to the 23S rRNA. The chain is Large ribosomal subunit protein bL9 from Brucella canis (strain ATCC 23365 / NCTC 10854 / RM-666).